Reading from the N-terminus, the 106-residue chain is Tubulin-specific chaperone A (106 aa).

Ser-94 is subject to Phosphoserine.

Belongs to the TBCA family.

Its subcellular location is the cytoplasm. It localises to the cytoskeleton. In terms of biological role, tubulin-folding protein; involved in the early step of the tubulin folding pathway. This Saccharomyces cerevisiae (strain ATCC 204508 / S288c) (Baker's yeast) protein is Tubulin-specific chaperone A (RBL2).